Here is a 223-residue protein sequence, read N- to C-terminus: Ribonuclease T (223 aa).

An Exonuclease domain is found at 20 to 194 (VVIDVETAGF…YDTERTAELF (175 aa)). Mg(2+)-binding residues include aspartate 23, glutamate 25, histidine 181, and aspartate 186. Histidine 181 functions as the Proton donor/acceptor in the catalytic mechanism.

It belongs to the RNase T family. Homodimer. Mg(2+) is required as a cofactor.

In terms of biological role, trims short 3' overhangs of a variety of RNA species, leaving a one or two nucleotide 3' overhang. Responsible for the end-turnover of tRNA: specifically removes the terminal AMP residue from uncharged tRNA (tRNA-C-C-A). Also appears to be involved in tRNA biosynthesis. The sequence is that of Ribonuclease T from Shewanella sp. (strain W3-18-1).